The chain runs to 496 residues: Signal recognition particle subunit SRP54 1 (496 aa).

Residues 1–296 (MVLAQLGGSI…DVKPFVSRLL (296 aa)) form a G-domain region. GTP-binding positions include 108–115 (GLQGSGKT), 191–195 (DTSGR), and 249–252 (TKMD). Residues 297 to 496 (GMGDLSGLVN…MGMFGGGGGE (200 aa)) form an M-domain region.

Belongs to the GTP-binding SRP family. SRP54 subfamily. In terms of assembly, component of a signal recognition particle (SRP) complex that consists of a 7SL RNA molecule of 300 nucleotides and six protein subunits: SRP72, SRP68, SRP54, SRP19, SRP14 and SRP9.

Its subcellular location is the cytoplasm. It localises to the endoplasmic reticulum. The enzyme catalyses GTP + H2O = GDP + phosphate + H(+). Its function is as follows. Component of the signal recognition particle (SRP) complex, a ribonucleoprotein complex that mediates the cotranslational targeting of secretory and membrane proteins to the endoplasmic reticulum (ER). As part of the SRP complex, associates with the SRP receptor (SR) component SRPRA to target secretory proteins to the endoplasmic reticulum membrane. Binds to the signal sequence of presecretory proteins when they emerge from the ribosomes. Displays basal GTPase activity, and stimulates reciprocal GTPase activation of the SR subunit SRPRA. Forms a guanosine 5'-triphosphate (GTP)-dependent complex with the SR subunit SRPRA. SR compaction and GTPase mediated rearrangement of SR drive SRP-mediated cotranslational protein translocation into the ER. Requires the presence of SRP9/SRP14 and/or SRP19 to stably interact with RNA. This is Signal recognition particle subunit SRP54 1 from Solanum lycopersicum (Tomato).